The following is a 151-amino-acid chain: Cysteine protease inhibitor 5 (151 aa).

2 disulfides stabilise this stretch: Cys-13–Cys-65 and Cys-114–Cys-120.

This sequence belongs to the protease inhibitor I3 (leguminous Kunitz-type inhibitor) family.

Its subcellular location is the vacuole. Its function is as follows. Inhibitor of cysteine proteases. May protect the plant by inhibiting proteases of invading organisms. The polypeptide is Cysteine protease inhibitor 5 (Solanum tuberosum (Potato)).